An 80-amino-acid polypeptide reads, in one-letter code: Small ribosomal subunit protein bS18 (80 aa).

This sequence belongs to the bacterial ribosomal protein bS18 family. Part of the 30S ribosomal subunit. Forms a tight heterodimer with protein bS6.

Functionally, binds as a heterodimer with protein bS6 to the central domain of the 16S rRNA, where it helps stabilize the platform of the 30S subunit. The chain is Small ribosomal subunit protein bS18 from Staphylococcus aureus (strain Mu3 / ATCC 700698).